Reading from the N-terminus, the 313-residue chain is 4-hydroxy-3-methylbut-2-enyl diphosphate reductase (313 aa).

Cys-13 is a binding site for [4Fe-4S] cluster. (2E)-4-hydroxy-3-methylbut-2-enyl diphosphate is bound by residues His-41 and His-75. Dimethylallyl diphosphate-binding residues include His-41 and His-75. Residues His-41 and His-75 each coordinate isopentenyl diphosphate. Cys-97 serves as a coordination point for [4Fe-4S] cluster. Residue His-125 coordinates (2E)-4-hydroxy-3-methylbut-2-enyl diphosphate. His-125 contacts dimethylallyl diphosphate. His-125 is an isopentenyl diphosphate binding site. Glu-127 acts as the Proton donor in catalysis. (2E)-4-hydroxy-3-methylbut-2-enyl diphosphate is bound at residue Thr-168. Cys-218 contributes to the [4Fe-4S] cluster binding site. (2E)-4-hydroxy-3-methylbut-2-enyl diphosphate-binding residues include Ser-246, Ser-247, Asn-248, and Ser-295. Ser-246, Ser-247, Asn-248, and Ser-295 together coordinate dimethylallyl diphosphate. Ser-246, Ser-247, Asn-248, and Ser-295 together coordinate isopentenyl diphosphate.

It belongs to the IspH family. [4Fe-4S] cluster is required as a cofactor.

The catalysed reaction is isopentenyl diphosphate + 2 oxidized [2Fe-2S]-[ferredoxin] + H2O = (2E)-4-hydroxy-3-methylbut-2-enyl diphosphate + 2 reduced [2Fe-2S]-[ferredoxin] + 2 H(+). The enzyme catalyses dimethylallyl diphosphate + 2 oxidized [2Fe-2S]-[ferredoxin] + H2O = (2E)-4-hydroxy-3-methylbut-2-enyl diphosphate + 2 reduced [2Fe-2S]-[ferredoxin] + 2 H(+). Its pathway is isoprenoid biosynthesis; dimethylallyl diphosphate biosynthesis; dimethylallyl diphosphate from (2E)-4-hydroxy-3-methylbutenyl diphosphate: step 1/1. The protein operates within isoprenoid biosynthesis; isopentenyl diphosphate biosynthesis via DXP pathway; isopentenyl diphosphate from 1-deoxy-D-xylulose 5-phosphate: step 6/6. Its function is as follows. Catalyzes the conversion of 1-hydroxy-2-methyl-2-(E)-butenyl 4-diphosphate (HMBPP) into a mixture of isopentenyl diphosphate (IPP) and dimethylallyl diphosphate (DMAPP). Acts in the terminal step of the DOXP/MEP pathway for isoprenoid precursor biosynthesis. This chain is 4-hydroxy-3-methylbut-2-enyl diphosphate reductase, found in Chlorobium phaeovibrioides (strain DSM 265 / 1930) (Prosthecochloris vibrioformis (strain DSM 265)).